A 380-amino-acid chain; its full sequence is MVNTTDFYPVPAAMAYESSVGLPLLGWNVPTEHLDLVHPHWRSFQVPNKYWHFGLAFVYFMLMCMSSLGNGIVLWIYATTKSIRTPSNMFIVNLALFDVLMLLEMPMLVVSSLFYQRPVGWELGCDIYAALGSVAGIGSAINNAAIAFDRYRTISCPIDGRLTQGQVLALIAGTWVWTLPFTLMPLLRIWSRFTAEGFLTTCSFDYLTDDEDTKVFVGCIFAWSYAFPLCLICCFYYRLIGAVREHEKMLRDQAKKMNVKSLQSNADTEAQSAEIRIAKVALTIFFLFLCSWTPYAVVAMIGAFGNRAALTPLSTMIPAVTAKIVSCIDPWVYAINHPRFRAEVQKRMKWLHLGEDARSSKSDTSSTATDRTVGNVSASA.

Residues 1 to 51 (MVNTTDFYPVPAAMAYESSVGLPLLGWNVPTEHLDLVHPHWRSFQVPNKYW) are Extracellular-facing. Asparagine 3 carries N-linked (GlcNAc...) asparagine glycosylation. A helical membrane pass occupies residues 52–76 (HFGLAFVYFMLMCMSSLGNGIVLWI). At 77-88 (YATTKSIRTPSN) the chain is on the cytoplasmic side. The chain crosses the membrane as a helical span at residues 89-115 (MFIVNLALFDVLMLLEMPMLVVSSLFY). Residues 116–128 (QRPVGWELGCDIY) are Extracellular-facing. Cysteine 125 and cysteine 202 form a disulfide bridge. A helical membrane pass occupies residues 129-148 (AALGSVAGIGSAINNAAIAF). At 149–166 (DRYRTISCPIDGRLTQGQ) the chain is on the cytoplasmic side. Residues 167–191 (VLALIAGTWVWTLPFTLMPLLRIWS) traverse the membrane as a helical segment. The Extracellular segment spans residues 192–215 (RFTAEGFLTTCSFDYLTDDEDTKV). The chain crosses the membrane as a helical span at residues 216–243 (FVGCIFAWSYAFPLCLICCFYYRLIGAV). At 244-279 (REHEKMLRDQAKKMNVKSLQSNADTEAQSAEIRIAK) the chain is on the cytoplasmic side. Residues 280 to 303 (VALTIFFLFLCSWTPYAVVAMIGA) traverse the membrane as a helical segment. Residues 304–311 (FGNRAALT) lie on the Extracellular side of the membrane. The helical transmembrane segment at 312–336 (PLSTMIPAVTAKIVSCIDPWVYAIN) threads the bilayer. Lysine 323 bears the N6-(retinylidene)lysine mark. Topologically, residues 337 to 380 (HPRFRAEVQKRMKWLHLGEDARSSKSDTSSTATDRTVGNVSASA) are cytoplasmic. Positions 358–380 (RSSKSDTSSTATDRTVGNVSASA) are disordered. Residues 362–372 (SDTSSTATDRT) are compositionally biased toward low complexity.

The protein belongs to the G-protein coupled receptor 1 family. Opsin subfamily. Post-translationally, phosphorylated on some or all of the serine and threonine residues present in the C-terminal region.

It localises to the membrane. Functionally, visual pigments are the light-absorbing molecules that mediate vision. They consist of an apoprotein, opsin, covalently linked to cis-retinal. The protein is Opsin-2 (Lo2) of Schistocerca gregaria (Desert locust).